Reading from the N-terminus, the 252-residue chain is Small ribosomal subunit protein uS3 (252 aa).

Residues 39-109 form the KH type-2 domain; the sequence is IRNYVQTRLK…EVKIDVVEVV (71 aa). Residues 221 to 241 show a composition bias toward basic and acidic residues; sequence EMKRIKERRSDSGPRSRNDRS. Positions 221 to 252 are disordered; the sequence is EMKRIKERRSDSGPRSRNDRSQKRRRRPNDRG. Residues 242–252 are compositionally biased toward basic residues; that stretch reads QKRRRRPNDRG.

Belongs to the universal ribosomal protein uS3 family. As to quaternary structure, part of the 30S ribosomal subunit. Forms a tight complex with proteins S10 and S14.

Its function is as follows. Binds the lower part of the 30S subunit head. Binds mRNA in the 70S ribosome, positioning it for translation. In Chlorobium luteolum (strain DSM 273 / BCRC 81028 / 2530) (Pelodictyon luteolum), this protein is Small ribosomal subunit protein uS3.